A 118-amino-acid chain; its full sequence is Large ribosomal subunit protein bL20 (118 aa).

It belongs to the bacterial ribosomal protein bL20 family.

Its function is as follows. Binds directly to 23S ribosomal RNA and is necessary for the in vitro assembly process of the 50S ribosomal subunit. It is not involved in the protein synthesizing functions of that subunit. The sequence is that of Large ribosomal subunit protein bL20 from Pectobacterium atrosepticum (strain SCRI 1043 / ATCC BAA-672) (Erwinia carotovora subsp. atroseptica).